The sequence spans 126 residues: RutC family protein SSO3206 (126 aa).

Belongs to the RutC family.

This chain is RutC family protein SSO3206, found in Saccharolobus solfataricus (strain ATCC 35092 / DSM 1617 / JCM 11322 / P2) (Sulfolobus solfataricus).